We begin with the raw amino-acid sequence, 647 residues long: 1-deoxy-D-xylulose-5-phosphate synthase (647 aa).

Thiamine diphosphate is bound by residues H88 and 129–131 (GHA). A Mg(2+)-binding site is contributed by D160. Residues 161–162 (GA), N189, Y300, and E377 contribute to the thiamine diphosphate site. N189 is a binding site for Mg(2+).

The protein belongs to the transketolase family. DXPS subfamily. In terms of assembly, homodimer. Requires Mg(2+) as cofactor. Thiamine diphosphate is required as a cofactor.

The enzyme catalyses D-glyceraldehyde 3-phosphate + pyruvate + H(+) = 1-deoxy-D-xylulose 5-phosphate + CO2. Its pathway is metabolic intermediate biosynthesis; 1-deoxy-D-xylulose 5-phosphate biosynthesis; 1-deoxy-D-xylulose 5-phosphate from D-glyceraldehyde 3-phosphate and pyruvate: step 1/1. In terms of biological role, catalyzes the acyloin condensation reaction between C atoms 2 and 3 of pyruvate and glyceraldehyde 3-phosphate to yield 1-deoxy-D-xylulose-5-phosphate (DXP). The chain is 1-deoxy-D-xylulose-5-phosphate synthase from Dehalococcoides mccartyi (strain CBDB1).